The primary structure comprises 129 residues: Fluoride-specific ion channel FluC 1 (129 aa).

A run of 3 helical transmembrane segments spans residues Ala-43 to Val-63, Val-68 to Tyr-88, and Leu-100 to Gly-120. Na(+) is bound by residues Gly-78 and Ser-81.

It belongs to the fluoride channel Fluc/FEX (TC 1.A.43) family.

It localises to the cell membrane. It carries out the reaction fluoride(in) = fluoride(out). Na(+) is not transported, but it plays an essential structural role and its presence is essential for fluoride channel function. Its function is as follows. Fluoride-specific ion channel. Important for reducing fluoride concentration in the cell, thus reducing its toxicity. In Frankia casuarinae (strain DSM 45818 / CECT 9043 / HFP020203 / CcI3), this protein is Fluoride-specific ion channel FluC 1.